Consider the following 266-residue polypeptide: Translation initiation factor 2 subunit alpha (266 aa).

The 72-residue stretch at 12–83 folds into the S1 motif domain; sequence GDIVIGTVKD…RKGHIDLSLK (72 aa).

Belongs to the eIF-2-alpha family. As to quaternary structure, heterotrimer composed of an alpha, a beta and a gamma chain.

In terms of biological role, eIF-2 functions in the early steps of protein synthesis by forming a ternary complex with GTP and initiator tRNA. The sequence is that of Translation initiation factor 2 subunit alpha (eif2a) from Methanocaldococcus jannaschii (strain ATCC 43067 / DSM 2661 / JAL-1 / JCM 10045 / NBRC 100440) (Methanococcus jannaschii).